The primary structure comprises 331 residues: Glucokinase (331 aa).

13-18 (GDIGGT) serves as a coordination point for ATP.

The protein belongs to the bacterial glucokinase family.

The protein localises to the cytoplasm. It carries out the reaction D-glucose + ATP = D-glucose 6-phosphate + ADP + H(+). The polypeptide is Glucokinase (Caulobacter vibrioides (strain ATCC 19089 / CIP 103742 / CB 15) (Caulobacter crescentus)).